Consider the following 225-residue polypeptide: MSSLLEVMDLTKGYGSGETRVDVLKGINLTVAEGETIALVGASGTGKSTLLHIMGTLDRPTSGSVRFGGEDVFRLGDAALASFRNHSIGFVFQFHHLLPEFTALENVMMPLLIAGVKRSDAAAPARELLGEVGLAHRLTHKPGELSGGEQQRVAIARALVLSPKLLLADEPTGNLDMKTSDEVHETLERVHRKRGVTLVIVTHNEKLASYMGRTVRLVDGRVVAD.

In terms of domain architecture, ABC transporter spans Leu5–Asp225. Gly41–Ser48 is an ATP binding site.

It belongs to the ABC transporter superfamily. Lipoprotein translocase (TC 3.A.1.125) family. The complex is composed of two ATP-binding proteins (LolD) and two transmembrane proteins (LolC and LolE).

The protein localises to the cell inner membrane. Functionally, part of the ABC transporter complex LolCDE involved in the translocation of mature outer membrane-directed lipoproteins, from the inner membrane to the periplasmic chaperone, LolA. Responsible for the formation of the LolA-lipoprotein complex in an ATP-dependent manner. The sequence is that of Lipoprotein-releasing system ATP-binding protein LolD from Geobacter metallireducens (strain ATCC 53774 / DSM 7210 / GS-15).